The primary structure comprises 353 residues: MRKAKNAVVMQKQQYNINKLQKRLRRHVGQAIADYAMIEEGDRIMVCLSGGKDSYTLLEILRNLQQSAPVNFSLVAVNLDQKQPGFPAHVLPEYLAAQGVEYHIVTEDTYHIVKDKIPEGKTTCSLCSRLRRGILYRTATELGATRIALGHHQDDILQTLFLNMFYGGKLKGMPPKLMSDDGKHIVIRPLAYCREKDIARFAQARQFPIIPCNLCGSQPNLQRQVIGDMLRDWDKRYPGRSETLFRAMQNVVPSHLSDTHLFDFKGLMQGSAVVDGGDIAFDRESFPAQPAGWQDLMDDDLPVSSRNDNWTCSNCAEYAQSAPPTQQRKALTGPQARIAGAPVIPLATRHPPW.

A PP-loop motif motif is present at residues 49–54; that stretch reads SGGKDS. Residues Cys124, Cys127, and Cys215 each coordinate [4Fe-4S] cluster.

This sequence belongs to the TtcA family. As to quaternary structure, homodimer. Mg(2+) serves as cofactor. It depends on [4Fe-4S] cluster as a cofactor.

It localises to the cytoplasm. The catalysed reaction is cytidine(32) in tRNA + S-sulfanyl-L-cysteinyl-[cysteine desulfurase] + AH2 + ATP = 2-thiocytidine(32) in tRNA + L-cysteinyl-[cysteine desulfurase] + A + AMP + diphosphate + H(+). The protein operates within tRNA modification. In terms of biological role, catalyzes the ATP-dependent 2-thiolation of cytidine in position 32 of tRNA, to form 2-thiocytidine (s(2)C32). The sulfur atoms are provided by the cysteine/cysteine desulfurase (IscS) system. This is tRNA-cytidine(32) 2-sulfurtransferase from Sodalis glossinidius (strain morsitans).